A 277-amino-acid chain; its full sequence is 3-methyl-2-oxobutanoate hydroxymethyltransferase (277 aa).

Mg(2+) is bound by residues D53 and D96. 3-methyl-2-oxobutanoate contacts are provided by residues 53 to 54 (DS), D96, and K126. E128 contributes to the Mg(2+) binding site. E195 functions as the Proton acceptor in the catalytic mechanism.

It belongs to the PanB family. In terms of assembly, homodecamer; pentamer of dimers. Mg(2+) serves as cofactor.

Its subcellular location is the cytoplasm. It carries out the reaction 3-methyl-2-oxobutanoate + (6R)-5,10-methylene-5,6,7,8-tetrahydrofolate + H2O = 2-dehydropantoate + (6S)-5,6,7,8-tetrahydrofolate. It functions in the pathway cofactor biosynthesis; (R)-pantothenate biosynthesis; (R)-pantoate from 3-methyl-2-oxobutanoate: step 1/2. In terms of biological role, catalyzes the reversible reaction in which hydroxymethyl group from 5,10-methylenetetrahydrofolate is transferred onto alpha-ketoisovalerate to form ketopantoate. The polypeptide is 3-methyl-2-oxobutanoate hydroxymethyltransferase (Prosthecochloris aestuarii (strain DSM 271 / SK 413)).